A 92-amino-acid chain; its full sequence is Small ribosomal subunit protein uS19c (92 aa).

It belongs to the universal ribosomal protein uS19 family.

It localises to the plastid. It is found in the chloroplast. Its function is as follows. Protein S19 forms a complex with S13 that binds strongly to the 16S ribosomal RNA. In Nymphaea alba (White water-lily), this protein is Small ribosomal subunit protein uS19c.